A 685-amino-acid chain; its full sequence is Cilia- and flagella-associated protein 36 (685 aa).

The interval 1–20 (MLRRFSKKNKNPEGGSDDAS) is disordered. Residues 197 to 242 (SEELEMMAQNSRIQREALEQEIRKEEILLQQALDEGARAQNQNQNQ) are a coiled coil. The segment covering 287-310 (TGTMTSSTGVSVGTLTNTGVSSGT) has biased composition (low complexity). The interval 287–573 (TGTMTSSTGV…LRGNKYDGDV (287 aa)) is disordered. The segment covering 363 to 372 (EAEKSKRERP) has biased composition (basic and acidic residues). The span at 410–434 (GTTSKKSIATVTASPEMSSKTTQME) shows a compositional bias: polar residues. Basic and acidic residues-rich tracts occupy residues 439–456 (GEGK…ERKY) and 508–557 (HEPR…ESKP).

The protein belongs to the CFAP36 family. As to expression, expressed in amphid and phasmid ciliated neurons.

Its subcellular location is the cell projection. It is found in the cilium. It localises to the cytoplasm. The protein localises to the cytoskeleton. The protein resides in the cilium axoneme. The protein is Cilia- and flagella-associated protein 36 of Caenorhabditis elegans.